The chain runs to 298 residues: Acetyl-coenzyme A carboxylase carboxyl transferase subunit beta (298 aa).

One can recognise a CoA carboxyltransferase N-terminal domain in the interval 41–298; it reads PTIECPECHA…RIVSKLMNLP (258 aa). The Zn(2+) site is built by Cys-45, Cys-48, Cys-64, and Cys-67. Residues 45 to 67 form a C4-type zinc finger; it reads CPECHALVTRTAIAFNAYVCPSC.

Belongs to the AccD/PCCB family. Acetyl-CoA carboxylase is a heterohexamer composed of biotin carboxyl carrier protein (AccB), biotin carboxylase (AccC) and two subunits each of ACCase subunit alpha (AccA) and ACCase subunit beta (AccD). Zn(2+) is required as a cofactor.

It localises to the cytoplasm. It carries out the reaction N(6)-carboxybiotinyl-L-lysyl-[protein] + acetyl-CoA = N(6)-biotinyl-L-lysyl-[protein] + malonyl-CoA. Its pathway is lipid metabolism; malonyl-CoA biosynthesis; malonyl-CoA from acetyl-CoA: step 1/1. In terms of biological role, component of the acetyl coenzyme A carboxylase (ACC) complex. Biotin carboxylase (BC) catalyzes the carboxylation of biotin on its carrier protein (BCCP) and then the CO(2) group is transferred by the transcarboxylase to acetyl-CoA to form malonyl-CoA. This Acinetobacter baylyi (strain ATCC 33305 / BD413 / ADP1) protein is Acetyl-coenzyme A carboxylase carboxyl transferase subunit beta.